Reading from the N-terminus, the 500-residue chain is NAD(P)H-quinone oxidoreductase chain 4, chloroplastic (500 aa).

A run of 14 helical transmembrane segments spans residues 4–24, 31–51, 84–104, 111–129, 134–154, 167–187, 208–228, 242–262, 272–292, 305–325, 330–350, 386–406, 416–436, and 463–483; these read FPWL…IFLF, VIKW…TYAF, GFSL…TLAA, SRLF…IGLF, LLLF…LLSM, FILY…GIAL, ALEI…SPII, HYST…YGLV, AHSI…IYAA, IAYS…SISD, GAIL…FLAG, LALP…GIIT, ILIT…LLSM, and FVSI…DFVF.

It belongs to the complex I subunit 4 family.

The protein localises to the plastid. It is found in the chloroplast thylakoid membrane. It catalyses the reaction a plastoquinone + NADH + (n+1) H(+)(in) = a plastoquinol + NAD(+) + n H(+)(out). It carries out the reaction a plastoquinone + NADPH + (n+1) H(+)(in) = a plastoquinol + NADP(+) + n H(+)(out). The sequence is that of NAD(P)H-quinone oxidoreductase chain 4, chloroplastic from Manihot esculenta (Cassava).